Reading from the N-terminus, the 98-residue chain is Parvalbumin beta 1 (98 aa).

N-acetylserine is present on S1. 2 EF-hand domains span residues 32–67 (KIGL…FSAG) and 67–98 (GARA…MIKG). Residues D45, D47, S49, F51, E53, E56, D80, D82, D84, K86, and E91 each coordinate Ca(2+).

The protein belongs to the parvalbumin family.

In terms of biological role, in muscle, parvalbumin is thought to be involved in relaxation after contraction. It binds two calcium ions. The chain is Parvalbumin beta 1 from Macruronus magellanicus (Patagonian grenadier).